A 346-amino-acid polypeptide reads, in one-letter code: Olfactory receptor 13D1 (346 aa).

Topologically, residues 1–57 (MYRFTDFDVSNISIYLNHVLFYTTQQAGDLEHMETRNYSAMTEFFLVGLSQYPELQL) are extracellular. N37 is a glycosylation site (N-linked (GlcNAc...) asparagine). The chain crosses the membrane as a helical span at residues 58-78 (FLFLLCLIMYMIILLGNSLLI). The Cytoplasmic segment spans residues 79–86 (IITILDSR). Residues 87–107 (LHTPMYFFLGNLSFLDICYTS) form a helical membrane-spanning segment. The Extracellular portion of the chain corresponds to 108 to 131 (SSIPPMLIIFMSERKSISFIGCAL). C129 and C221 are oxidised to a cystine. Residues 132 to 152 (QMVVSLGLGSTECVLLAVMAY) form a helical membrane-spanning segment. The Cytoplasmic portion of the chain corresponds to 153–171 (DHYVAICNPLRYSIIMNGV). Residues 172–192 (LYVQMAAWSWIIGCLTSLLQT) traverse the membrane as a helical segment. Residues 193 to 229 (VLTMMLPFCGNNVIDHITCEILALLKLVCSDITINVL) are Extracellular-facing. Residues 230 to 249 (IMTVTNIVSLVILLLLIFIS) traverse the membrane as a helical segment. Over 250-269 (YVFILSSILRINCAEGRKKA) the chain is Cytoplasmic. A helical membrane pass occupies residues 270-290 (FSTCSAHSIVVILFYGSALFM). Topologically, residues 291–303 (YMKPKSKNTNTSD) are extracellular. An N-linked (GlcNAc...) asparagine glycan is attached at N300. A helical transmembrane segment spans residues 304–324 (EIIGLSYGVVSPMLNPIIYSL). Residues 325-346 (RNKEVKEAVKKVLSRHLHLLKM) are Cytoplasmic-facing.

Belongs to the G-protein coupled receptor 1 family.

The protein resides in the cell membrane. Functionally, odorant receptor. In Homo sapiens (Human), this protein is Olfactory receptor 13D1 (OR13D1).